Consider the following 406-residue polypeptide: Probable tRNA sulfurtransferase (406 aa).

A THUMP domain is found at 60–166; sequence EPVMERLKQV…LNGIYLTSAK (107 aa). Residues 184 to 185, 209 to 210, arginine 266, glycine 288, and glutamine 297 each bind ATP; these read ML and HF.

This sequence belongs to the ThiI family.

The protein localises to the cytoplasm. The enzyme catalyses [ThiI sulfur-carrier protein]-S-sulfanyl-L-cysteine + a uridine in tRNA + 2 reduced [2Fe-2S]-[ferredoxin] + ATP + H(+) = [ThiI sulfur-carrier protein]-L-cysteine + a 4-thiouridine in tRNA + 2 oxidized [2Fe-2S]-[ferredoxin] + AMP + diphosphate. It carries out the reaction [ThiS sulfur-carrier protein]-C-terminal Gly-Gly-AMP + S-sulfanyl-L-cysteinyl-[cysteine desulfurase] + AH2 = [ThiS sulfur-carrier protein]-C-terminal-Gly-aminoethanethioate + L-cysteinyl-[cysteine desulfurase] + A + AMP + 2 H(+). It functions in the pathway cofactor biosynthesis; thiamine diphosphate biosynthesis. Functionally, catalyzes the ATP-dependent transfer of a sulfur to tRNA to produce 4-thiouridine in position 8 of tRNAs, which functions as a near-UV photosensor. Also catalyzes the transfer of sulfur to the sulfur carrier protein ThiS, forming ThiS-thiocarboxylate. This is a step in the synthesis of thiazole, in the thiamine biosynthesis pathway. The sulfur is donated as persulfide by IscS. This chain is Probable tRNA sulfurtransferase, found in Limosilactobacillus fermentum (strain NBRC 3956 / LMG 18251) (Lactobacillus fermentum).